A 120-amino-acid polypeptide reads, in one-letter code: NAD(P)H-quinone oxidoreductase subunit 3, chloroplastic (120 aa).

Transmembrane regions (helical) follow at residues 10–30, 64–84, and 89–109; these read FWFFLIIGAIIPTLAFTTSKL, MFALVFVIFDVETIFLYPWAM, and LGVYGFIEALIFVLILVIGLV.

The protein belongs to the complex I subunit 3 family. In terms of assembly, NDH is composed of at least 16 different subunits, 5 of which are encoded in the nucleus.

It is found in the plastid. The protein localises to the chloroplast thylakoid membrane. The catalysed reaction is a plastoquinone + NADH + (n+1) H(+)(in) = a plastoquinol + NAD(+) + n H(+)(out). It carries out the reaction a plastoquinone + NADPH + (n+1) H(+)(in) = a plastoquinol + NADP(+) + n H(+)(out). In terms of biological role, NDH shuttles electrons from NAD(P)H:plastoquinone, via FMN and iron-sulfur (Fe-S) centers, to quinones in the photosynthetic chain and possibly in a chloroplast respiratory chain. The immediate electron acceptor for the enzyme in this species is believed to be plastoquinone. Couples the redox reaction to proton translocation, and thus conserves the redox energy in a proton gradient. The protein is NAD(P)H-quinone oxidoreductase subunit 3, chloroplastic of Chaetosphaeridium globosum (Charophycean green alga).